Consider the following 143-residue polypeptide: Large ribosomal subunit protein uL11 (143 aa).

Belongs to the universal ribosomal protein uL11 family. As to quaternary structure, part of the ribosomal stalk of the 50S ribosomal subunit. Interacts with L10 and the large rRNA to form the base of the stalk. L10 forms an elongated spine to which L12 dimers bind in a sequential fashion forming a multimeric L10(L12)X complex. Post-translationally, one or more lysine residues are methylated.

Its function is as follows. Forms part of the ribosomal stalk which helps the ribosome interact with GTP-bound translation factors. In Beutenbergia cavernae (strain ATCC BAA-8 / DSM 12333 / CCUG 43141 / JCM 11478 / NBRC 16432 / NCIMB 13614 / HKI 0122), this protein is Large ribosomal subunit protein uL11.